Here is a 460-residue protein sequence, read N- to C-terminus: MALWGGRFTQAADQRFKDFNDSLRFDYRLAEQDIEGSVGWSKALVSVGVLTTDEQQQLERALNELLIEVRSNPQAILQDDAEDIHSWVESKLIDKVGNLGKKLHTGRSRNDQVALDIKMWCKAQVTELQYAVRDLQAKLVETAENNQHAVMPGYTHLQRAQPISFAHWCMAYVEMLERDYSRLADAYNRMDSCPLGSGALAGTAYPVDREQLAKDLGFAFATRNSLDSVSDRDHIIELLSTASLSMVHLSRFAEDMIIFNSGEADFVELSDRVTSGSSLMPQKKNPDACELIRGKAGRVIGSLTGMMVTVKGLPLAYNKDMQEDKEGIFDALDTWHDCLTMAAFVLEDIRVNVERTREAALKGYSNATELADYLVAKGVPFRDSHHIVGETVVYAIKVHKGLEDLSIEEFRQFSDVVGEDVYPILSLQSCLDKRSAKGGVSPLRVAEAIADAKARIAAKK.

It belongs to the lyase 1 family. Argininosuccinate lyase subfamily.

The protein resides in the cytoplasm. It catalyses the reaction 2-(N(omega)-L-arginino)succinate = fumarate + L-arginine. Its pathway is amino-acid biosynthesis; L-arginine biosynthesis; L-arginine from L-ornithine and carbamoyl phosphate: step 3/3. The sequence is that of Argininosuccinate lyase from Mannheimia succiniciproducens (strain KCTC 0769BP / MBEL55E).